Consider the following 1002-residue polypeptide: Leucine-rich repeat receptor-like serine/threonine-protein kinase BAM2 (1002 aa).

An N-terminal signal peptide occupies residues 1–22 (MKLLLLLLLLLLLHISHSFTVA). Residues 23–636 (KPITELHALL…SHVKPLSATT (614 aa)) are Extracellular-facing. N-linked (GlcNAc...) asparagine glycans are attached at residues Asn51, Asn80, Asn97, Asn123, Asn130, Asn153, and Asn164. LRR repeat units lie at residues 68 to 92 (LRHV…VAHL), 93 to 116 (PLLQ…ISNL), 118 to 140 (ELRH…LSSG), 141 to 165 (LVNL…LTNL), 167 to 188 (QLRH…TYGT), 189 to 213 (WPVL…IGNL), 215 to 238 (TLRE…IGNL), 239 to 262 (SELV…IGKL), 263 to 285 (QKLD…ELGL), 286 to 309 (ISSL…SFSQ), 311 to 334 (KNLT…IGEM), 335 to 358 (PELE…LGEN), 359 to 382 (GRLV…MCSG), 384 to 406 (RLMT…LGKC), 407 to 430 (ESLT…LFGL), 431 to 456 (PKLS…GVSG), 458 to 479 (LGQI…IGNL), 480 to 503 (SGVQ…IGRL), 505 to 527 (QLSK…ISRC), 528 to 551 (KLLT…LTGM), 552 to 575 (KILN…IASM), and 577 to 600 (SLTS…QFSY). 2 N-linked (GlcNAc...) asparagine glycosylation sites follow: Asn212 and Asn237. Asn312 and Asn346 each carry an N-linked (GlcNAc...) asparagine glycan. The N-linked (GlcNAc...) asparagine glycan is linked to Asn420. Residue Asn478 is glycosylated (N-linked (GlcNAc...) asparagine). Asn558, Asn587, and Asn602 each carry an N-linked (GlcNAc...) asparagine glycan. A helical transmembrane segment spans residues 637 to 657 (KLLLVLGLLFCSMVFAIVAII). Residues 658–1002 (KARSLRNASE…SGSPPDLLSN (345 aa)) lie on the Cytoplasmic side of the membrane. Thr682 is modified (phosphothreonine). The Protein kinase domain maps to 690–967 (LKEDNIIGKG…VQILTEIPKI (278 aa)). Residues 696–704 (IGKGGAGIV) and Lys718 each bind ATP. A phosphotyrosine mark is found at Tyr765 and Tyr803. Asp816 acts as the Proton acceptor in catalysis. A Phosphoserine modification is found at Ser851. Phosphotyrosine is present on residues Tyr859 and Tyr866. The residue at position 867 (Thr867) is a Phosphothreonine. The disordered stretch occupies residues 969–1002 (LSKQQAAESDVTEKAPAINESSPDSGSPPDLLSN). Over residues 989–1002 (SSPDSGSPPDLLSN) the composition is skewed to low complexity.

The protein belongs to the protein kinase superfamily. Ser/Thr protein kinase family. Interacts with BAM1 and CLV1. Binds to the CLV3, CLE11, CLE18, CLE19, CLE22, CLE25, CLE26, CLE40, CLE41 and CLE42 mature peptides, probably via its extracellular leucine-rich repeat region. Expressed in seedlings, roots, rosette leaves, stems, inflorescences, flowers and siliques.

The protein localises to the cell membrane. The catalysed reaction is L-seryl-[protein] + ATP = O-phospho-L-seryl-[protein] + ADP + H(+). It carries out the reaction L-threonyl-[protein] + ATP = O-phospho-L-threonyl-[protein] + ADP + H(+). Functionally, necessary for male gametophyte development, as well as ovule specification and function. Involved in cell-cell communication process required during early anther development, and regulating cell division and differentiation to organize cell layers. Required for the development of high-ordered vascular strands within the leaf and a correlated control of leaf shape, size and symmetry. May regulate the CLV1-dependent CLV3-mediated signaling in meristems maintenance. The polypeptide is Leucine-rich repeat receptor-like serine/threonine-protein kinase BAM2 (BAM2) (Arabidopsis thaliana (Mouse-ear cress)).